A 205-amino-acid polypeptide reads, in one-letter code: Imidazole glycerol phosphate synthase subunit HisH (205 aa).

A Glutamine amidotransferase type-1 domain is found at 3 to 205; that stretch reads KIGLIDYGMG…LLRRWLSNIQ (203 aa). Cys81 (nucleophile) is an active-site residue. Catalysis depends on residues His185 and Glu187.

Heterodimer of HisH and HisF.

The protein localises to the cytoplasm. It carries out the reaction 5-[(5-phospho-1-deoxy-D-ribulos-1-ylimino)methylamino]-1-(5-phospho-beta-D-ribosyl)imidazole-4-carboxamide + L-glutamine = D-erythro-1-(imidazol-4-yl)glycerol 3-phosphate + 5-amino-1-(5-phospho-beta-D-ribosyl)imidazole-4-carboxamide + L-glutamate + H(+). The enzyme catalyses L-glutamine + H2O = L-glutamate + NH4(+). It participates in amino-acid biosynthesis; L-histidine biosynthesis; L-histidine from 5-phospho-alpha-D-ribose 1-diphosphate: step 5/9. In terms of biological role, IGPS catalyzes the conversion of PRFAR and glutamine to IGP, AICAR and glutamate. The HisH subunit catalyzes the hydrolysis of glutamine to glutamate and ammonia as part of the synthesis of IGP and AICAR. The resulting ammonia molecule is channeled to the active site of HisF. In Prochlorococcus marinus (strain MIT 9312), this protein is Imidazole glycerol phosphate synthase subunit HisH.